The sequence spans 427 residues: Glutamate-1-semialdehyde 2,1-aminomutase (427 aa).

At K266 the chain carries N6-(pyridoxal phosphate)lysine.

It belongs to the class-III pyridoxal-phosphate-dependent aminotransferase family. HemL subfamily. As to quaternary structure, homodimer. Requires pyridoxal 5'-phosphate as cofactor.

It is found in the cytoplasm. The catalysed reaction is (S)-4-amino-5-oxopentanoate = 5-aminolevulinate. It participates in porphyrin-containing compound metabolism; protoporphyrin-IX biosynthesis; 5-aminolevulinate from L-glutamyl-tRNA(Glu): step 2/2. The chain is Glutamate-1-semialdehyde 2,1-aminomutase from Aromatoleum aromaticum (strain DSM 19018 / LMG 30748 / EbN1) (Azoarcus sp. (strain EbN1)).